Here is a 320-residue protein sequence, read N- to C-terminus: Cytochrome f (320 aa).

Residues 1–35 form the signal peptide; sequence MQTRNAFSCIKEGITRSISISVMIYIIIRAPFSNA. Heme contacts are provided by tyrosine 36, cysteine 56, cysteine 59, and histidine 60. The chain crosses the membrane as a helical span at residues 286–306; that stretch reads VQGLLFFLASIILAQIFLVLK.

This sequence belongs to the cytochrome f family. In terms of assembly, the 4 large subunits of the cytochrome b6-f complex are cytochrome b6, subunit IV (17 kDa polypeptide, petD), cytochrome f and the Rieske protein, while the 4 small subunits are PetG, PetL, PetM and PetN. The complex functions as a dimer. The cofactor is heme.

Its subcellular location is the plastid. It is found in the chloroplast thylakoid membrane. Its function is as follows. Component of the cytochrome b6-f complex, which mediates electron transfer between photosystem II (PSII) and photosystem I (PSI), cyclic electron flow around PSI, and state transitions. This chain is Cytochrome f, found in Phaseolus vulgaris (Kidney bean).